Reading from the N-terminus, the 429-residue chain is UDP-N-acetylglucosamine 1-carboxyvinyltransferase (429 aa).

22-23 (KN) is a phosphoenolpyruvate binding site. R102 contributes to the UDP-N-acetyl-alpha-D-glucosamine binding site. C126 functions as the Proton donor in the catalytic mechanism. 2-(S-cysteinyl)pyruvic acid O-phosphothioketal is present on C126. Residues D316 and I338 each coordinate UDP-N-acetyl-alpha-D-glucosamine.

This sequence belongs to the EPSP synthase family. MurA subfamily.

It localises to the cytoplasm. It carries out the reaction phosphoenolpyruvate + UDP-N-acetyl-alpha-D-glucosamine = UDP-N-acetyl-3-O-(1-carboxyvinyl)-alpha-D-glucosamine + phosphate. It participates in cell wall biogenesis; peptidoglycan biosynthesis. In terms of biological role, cell wall formation. Adds enolpyruvyl to UDP-N-acetylglucosamine. The sequence is that of UDP-N-acetylglucosamine 1-carboxyvinyltransferase from Methylorubrum extorquens (strain PA1) (Methylobacterium extorquens).